Here is a 120-residue protein sequence, read N- to C-terminus: Large ribosomal subunit protein uL18 (120 aa).

Belongs to the universal ribosomal protein uL18 family. Part of the 50S ribosomal subunit; part of the 5S rRNA/L5/L18/L25 subcomplex. Contacts the 5S and 23S rRNAs.

This is one of the proteins that bind and probably mediate the attachment of the 5S RNA into the large ribosomal subunit, where it forms part of the central protuberance. This is Large ribosomal subunit protein uL18 from Brevibacillus brevis (strain 47 / JCM 6285 / NBRC 100599).